Consider the following 864-residue polypeptide: Protein PAT1 homolog 1 (864 aa).

A compositionally biased stretch (polar residues) spans 427–439 (PPNSRPNGPQFSG). Disordered stretches follow at residues 427 to 460 (PPNS…SGMP), 518 to 539 (WTAH…SRKD), and 551 to 602 (EMQK…STHN). Residues 551-580 (EMQKERLRDREKERQRERQERIDRGEERKP) are compositionally biased toward basic and acidic residues.

This sequence belongs to the PAT1 family.

Its subcellular location is the cytoplasm. The protein localises to the P-body. Its function is as follows. RNA-binding protein involved in deadenylation-dependent decapping of mRNAs, leading to the degradation of mRNAs. Acts as a scaffold protein that connects deadenylation and decapping machinery. Required for the recruitment of P-body components such as cgh-1 in somatic blastomeres. May play a role in recruiting the decapping enzyme dcap-1 to cytoplasmic puncta in the cell body of the posterior touch receptor neuron, PLM. The protein is Protein PAT1 homolog 1 (patr-1) of Caenorhabditis briggsae.